Consider the following 723-residue polypeptide: Threonine--tRNA ligase, mitochondrial (723 aa).

Phosphoserine is present on serine 57. Residues 64-126 (RAIKISLPEG…ETDCHLRFLT (63 aa)) form the TGS domain.

The protein belongs to the class-II aminoacyl-tRNA synthetase family. As to quaternary structure, homodimer.

The protein resides in the mitochondrion matrix. The catalysed reaction is tRNA(Thr) + L-threonine + ATP = L-threonyl-tRNA(Thr) + AMP + diphosphate + H(+). Catalyzes the attachment of threonine to tRNA(Thr) in a two-step reaction: threonine is first activated by ATP to form Thr-AMP and then transferred to the acceptor end of tRNA(Thr). Also edits incorrectly charged tRNA(Thr) via its editing domain. This Mus musculus (Mouse) protein is Threonine--tRNA ligase, mitochondrial (Tars2).